The following is a 217-amino-acid chain: Trimethylamine corrinoid protein 2 (217 aa).

The B12-binding N-terminal domain maps to 1–92 (MAGKEEIIAK…EMEKRKAKTT (92 aa)). Residues 94–217 (LGTVIIGTIE…VNKIKAAIKS (124 aa)) form the B12-binding domain. Residue H107 coordinates methylcob(III)alamin.

It belongs to the methylamine corrinoid protein family. In terms of assembly, can form a complex with MttB.

Its pathway is one-carbon metabolism; methanogenesis from trimethylamine. In terms of biological role, acts probably as a methyl group carrier between MttB and either MtbA or MtaA. The polypeptide is Trimethylamine corrinoid protein 2 (mttC2) (Methanosarcina acetivorans (strain ATCC 35395 / DSM 2834 / JCM 12185 / C2A)).